The sequence spans 244 residues: Adiponectin (244 aa).

Residues Met-1–Gln-18 form the signal peptide. O-linked (GalNAc...) threonine glycans are attached at residues Thr-21 and Thr-22. Lys-33 carries the post-translational modification 5-hydroxylysine. The residue at position 36 (Cys-36) is an S-(2-succinyl)cysteine. Residues Met-40–Lys-101 form a disordered region. In terms of domain architecture, Collagen-like spans Gly-42–Gly-107. A 4-hydroxyproline mark is found at Pro-44, Pro-47, and Pro-53. Residues Arg-55–Asp-70 are compositionally biased toward basic and acidic residues. 2 positions are modified to 5-hydroxylysine: Lys-65 and Lys-68. Residues Lys-65 and Lys-68 are each glycosylated (O-linked (Gal...) hydroxylysine; partial). 4-hydroxyproline; partial occurs at positions 71 and 76. The residue at position 77 (Lys-77) is a 5-hydroxylysine. Lys-77 is a glycosylation site (O-linked (Gal...) hydroxylysine; partial). Pro-91 bears the 4-hydroxyproline mark. Position 95 is a 4-hydroxyproline; partial (Pro-95). The residue at position 101 (Lys-101) is a 5-hydroxylysine. O-linked (Gal...) hydroxylysine; partial glycosylation is present at Lys-101. Residues Ala-108–Asn-244 enclose the C1q domain.

In terms of assembly, homomultimer. Forms trimers, hexamers and 12- to 18-mers. The trimers (low molecular weight complexes / LMW) are assembled via non-covalent interactions of the collagen-like domains in a triple helix and hydrophobic interactions within the globular C1q domain. Several trimers can associate to form disulfide-linked hexamers (middle molecular weight complexes / MMW) and larger complexes (higher molecular weight / HMW). The HMW-complex assembly is also modulated by the degree of lysine hydroxylation and glycosylation. LMW, MMW and HMW complexes bind to HBEGF, MMW and HMW complexes bind to PDGFB, and HMW complex binds to FGF2. Interacts with CTRP9 via the C1q domain (heterotrimeric complex). HMW complexes are more extensively glycosylated than smaller oligomers. Hydroxylation and glycosylation of the lysine residues within the collagen-like domain of adiponectin seem to be critically involved in regulating the formation and/or secretion of HMW complexes and consequently contribute to the insulin-sensitizing activity of adiponectin in hepatocytes. Post-translationally, O-glycosylated. Not N-glycosylated. O-linked glycans on hydroxylysines consist of Glc-Gal disaccharides bound to the oxygen atom of post-translationally added hydroxyl groups. Sialylated to varying degrees depending on tissue. Thr-22 appears to be the major site of sialylation. Higher sialylation found in SGBS adipocytes than in HEK fibroblasts. Sialylation is not required neither for heterodimerization nor for secretion. Not sialylated on the glycosylated hydroxylysines. Desialylated forms are rapidly cleared from the circulation. In terms of processing, succination of Cys-36 by the Krebs cycle intermediate fumarate, which leads to S-(2-succinyl)cysteine residues, inhibits polymerization and secretion of adiponectin. Adiponectin is a major target for succination in both adipocytes and adipose tissue of diabetic mammals. It was proposed that succination of proteins is a biomarker of mitochondrial stress and accumulation of Krebs cycle intermediates in adipose tissue in diabetes and that succination of adiponectin may contribute to the decrease in plasma adiponectin in diabetes. In terms of tissue distribution, synthesized exclusively by adipocytes and secreted into plasma.

It localises to the secreted. With respect to regulation, polymerization and secretion of adiponectin is inhibited by succination of cysteine residues by the Krebs cycle intermediate fumarate, which leads to S-(2-succinyl)cysteine residues. Important adipokine involved in the control of fat metabolism and insulin sensitivity, with direct anti-diabetic, anti-atherogenic and anti-inflammatory activities. Stimulates AMPK phosphorylation and activation in the liver and the skeletal muscle, enhancing glucose utilization and fatty-acid combustion. Antagonizes TNF-alpha by negatively regulating its expression in various tissues such as liver and macrophages, and also by counteracting its effects. Inhibits endothelial NF-kappa-B signaling through a cAMP-dependent pathway. May play a role in cell growth, angiogenesis and tissue remodeling by binding and sequestering various growth factors with distinct binding affinities, depending on the type of complex, LMW, MMW or HMW. In Homo sapiens (Human), this protein is Adiponectin (ADIPOQ).